The sequence spans 545 residues: MDSQRNLLLIALLFVSFMIWQAWQTDNAPQPVAQTTQQTSNPATGDAASSAVPASGQGKLITVNTDVLSLTINTRGGDIEQAKLLAYPDTLGSSTPFQLLETTPAFVYQAQSGLTGRNGPDNPANGERPLFQAAQDSYTLPEGQEELRIPLTFTGKDGAIYTKTFVLKRNHYAVAVDYNVDNKSTTPLELTLFGQLKQTTELPKHRDTGSNNFALHTFRGAAYSSSDDKYQKYAFDKDENLSVTTQGGWVAMLQQYFATAWVPATQGSNTFYTAKPGDNLSTIGFKSTPVVVQPGAQQQLNATLWVGPELQDQMAQLAPHLDLTVDYGWLWFISQPLFKLLKFIHGFIGNWGFSIIIITFIVRGIMYPLTKAQYTSMAKMRMLQPKLQAMRERIGDDKQRMSQEMMALYKSEKVNPLGGCLPLVIQMPIFLALYYMLMGSVELRHAPFALWIHDLSAQDPYYILPILMGVTMFFIQKMSPTTVTDPMQQKIMTFMPVIFTVFFLWFPSGLVLYYIVSNLVTILQQQLIYRGLEKRGLHSRDKKKT.

The helical transmembrane segment at 6 to 26 (NLLLIALLFVSFMIWQAWQTD) threads the bilayer. The disordered stretch occupies residues 31–54 (PVAQTTQQTSNPATGDAASSAVPA). Helical transmembrane passes span 342 to 362 (KFIHGFIGNWGFSIIIITFIV), 417 to 437 (LGGCLPLVIQMPIFLALYYML), 455 to 475 (LSAQDPYYILPILMGVTMFFI), and 496 to 516 (PVIFTVFFLWFPSGLVLYYIV).

The protein belongs to the OXA1/ALB3/YidC family. Type 1 subfamily. Interacts with the Sec translocase complex via SecD. Specifically interacts with transmembrane segments of nascent integral membrane proteins during membrane integration.

The protein resides in the cell inner membrane. In terms of biological role, required for the insertion and/or proper folding and/or complex formation of integral membrane proteins into the membrane. Involved in integration of membrane proteins that insert both dependently and independently of the Sec translocase complex, as well as at least some lipoproteins. Aids folding of multispanning membrane proteins. This chain is Membrane protein insertase YidC, found in Serratia proteamaculans (strain 568).